The chain runs to 142 residues: Hemoglobin subunit alpha-A (142 aa).

The region spanning 2–142 (VLSGSDKTNV…VGNVLTAKYR (141 aa)) is the Globin domain. His-59 is a binding site for O2. His-88 lines the heme b pocket.

This sequence belongs to the globin family. As to quaternary structure, heterotetramer of two alpha chains and two beta chains. Red blood cells.

In terms of biological role, involved in oxygen transport from the lung to the various peripheral tissues. This is Hemoglobin subunit alpha-A (HBAA) from Ara ararauna (Blue-and-yellow macaw).